Here is a 271-residue protein sequence, read N- to C-terminus: 4-hydroxy-tetrahydrodipicolinate reductase (271 aa).

Residues 11–16 (GGSGRM) and Glu37 each bind NAD(+). Residue Arg38 coordinates NADP(+). NAD(+) is bound by residues 101 to 103 (GTT) and 125 to 128 (APNM). His158 functions as the Proton donor/acceptor in the catalytic mechanism. His159 contacts (S)-2,3,4,5-tetrahydrodipicolinate. Lys162 acts as the Proton donor in catalysis. 168–169 (GT) contacts (S)-2,3,4,5-tetrahydrodipicolinate.

This sequence belongs to the DapB family.

It is found in the cytoplasm. It catalyses the reaction (S)-2,3,4,5-tetrahydrodipicolinate + NAD(+) + H2O = (2S,4S)-4-hydroxy-2,3,4,5-tetrahydrodipicolinate + NADH + H(+). The enzyme catalyses (S)-2,3,4,5-tetrahydrodipicolinate + NADP(+) + H2O = (2S,4S)-4-hydroxy-2,3,4,5-tetrahydrodipicolinate + NADPH + H(+). Its pathway is amino-acid biosynthesis; L-lysine biosynthesis via DAP pathway; (S)-tetrahydrodipicolinate from L-aspartate: step 4/4. Catalyzes the conversion of 4-hydroxy-tetrahydrodipicolinate (HTPA) to tetrahydrodipicolinate. This is 4-hydroxy-tetrahydrodipicolinate reductase from Shewanella piezotolerans (strain WP3 / JCM 13877).